Here is a 224-residue protein sequence, read N- to C-terminus: Deoxyguanosine kinase (224 aa).

Residue 8–16 participates in ATP binding; the sequence is GPIGAGKSS. The substrate site is built by Glu-32, Tyr-44, and Gln-55. The Proton acceptor role is filled by Asp-78. Substrate-binding residues include Arg-79, Asp-84, and Glu-149.

Belongs to the DCK/DGK family. In terms of assembly, heterodimer of a deoxyadenosine (DAK) and a deoxyguanosine kinase (DGK).

The catalysed reaction is 2'-deoxyguanosine + ATP = dGMP + ADP + H(+). Its function is as follows. DGK/DAK plays an essential role in generating the deoxyribonucleotide precursors, dGTP and dATP, for DNA metabolism. This Lactobacillus johnsonii (strain CNCM I-12250 / La1 / NCC 533) protein is Deoxyguanosine kinase.